An 88-amino-acid chain; its full sequence is UPF0250 protein Shal_3239 (88 aa).

Belongs to the UPF0250 family.

In Shewanella halifaxensis (strain HAW-EB4), this protein is UPF0250 protein Shal_3239.